The chain runs to 693 residues: Elongation factor G (693 aa).

Residues 8–283 form the tr-type G domain; sequence NRIRNIGIAA…AVIDYLPAPT (276 aa). GTP is bound by residues 17-24, 81-85, and 135-138; these read AHIDAGKT, DTPGH, and NKMD.

This sequence belongs to the TRAFAC class translation factor GTPase superfamily. Classic translation factor GTPase family. EF-G/EF-2 subfamily.

The protein resides in the cytoplasm. Its function is as follows. Catalyzes the GTP-dependent ribosomal translocation step during translation elongation. During this step, the ribosome changes from the pre-translocational (PRE) to the post-translocational (POST) state as the newly formed A-site-bound peptidyl-tRNA and P-site-bound deacylated tRNA move to the P and E sites, respectively. Catalyzes the coordinated movement of the two tRNA molecules, the mRNA and conformational changes in the ribosome. The polypeptide is Elongation factor G (Wolinella succinogenes (strain ATCC 29543 / DSM 1740 / CCUG 13145 / JCM 31913 / LMG 7466 / NCTC 11488 / FDC 602W) (Vibrio succinogenes)).